Consider the following 216-residue polypeptide: MSAARKRPGTGRRQTDDADTGAPDQSYLDGQLLIAMPVMEDERFARSVIYVCAHSSEGAMGIILNRPAGSVDFADLLVQLDIIKRSDSIKLPETAEAMKVMKGGPVETGRGFVLHSSDFFIEDATLPIDDGVCLTATLDILEAIAKGAGPKHAILALGYAGWAPGQLETEIQDNGWLHCPADPELIFGRDIEDKYTRALHKIGIDPGMLSNEAGHA.

Residues 1 to 10 are compositionally biased toward basic residues; it reads MSAARKRPGT. Residues 1-25 form a disordered region; it reads MSAARKRPGTGRRQTDDADTGAPDQ.

The protein belongs to the UPF0301 (AlgH) family.

This Nitrobacter hamburgensis (strain DSM 10229 / NCIMB 13809 / X14) protein is UPF0301 protein Nham_3550.